Here is a 238-residue protein sequence, read N- to C-terminus: Adapter protein MecA (238 aa).

Positions 108-133 are disordered; that stretch reads EDENEESVQGNQQQRRSHASDHSKRA.

The protein belongs to the MecA family. Homodimer.

Enables the recognition and targeting of unfolded and aggregated proteins to the ClpC protease or to other proteins involved in proteolysis. The protein is Adapter protein MecA of Staphylococcus carnosus (strain TM300).